The chain runs to 163 residues: Auxin-responsive protein IAA5 (163 aa).

The EAR-like (transcriptional repression) signature appears at 15–19 (LRLGL). A PB1 domain is found at 74–160 (SSYVKVSVDG…KRLRIMKRSC (87 aa)).

It belongs to the Aux/IAA family. In terms of assembly, homodimers and heterodimers. Highly expressed in stems and flowers.

The protein localises to the nucleus. Aux/IAA proteins are short-lived transcriptional factors that function as repressors of early auxin response genes at low auxin concentrations. Repression is thought to result from the interaction with auxin response factors (ARFs), proteins that bind to the auxin-responsive promoter element (AuxRE). Formation of heterodimers with ARF proteins may alter their ability to modulate early auxin response genes expression. This is Auxin-responsive protein IAA5 (IAA5) from Arabidopsis thaliana (Mouse-ear cress).